The primary structure comprises 181 residues: Ninjurin-B (181 aa).

The span at 1–10 (MDSGEVKISL) shows a compositional bias: basic and acidic residues. The tract at residues 1–72 (MDSGEVKISL…SNKKCSSDLS (72 aa)) is disordered. The Extracellular segment spans residues 1–115 (MDSGEVKISL…YNDKASTYIY (115 aa)). Positions 12-26 (DSPSSGESFASTTSG) are enriched in polar residues. A compositionally biased stretch (basic and acidic residues) spans 33-49 (RDLDIQVHESHIKDDQF). The interval 80 to 91 (NKNVAEGLMDIA) is helix alpha1. The interval 94-110 (SANANQLRFLITYNDKA) is helix alpha2. The helical transmembrane segment at 116-136 (SMIMVILSLVLQLLVGIMLIF) threads the bilayer. The Cytoplasmic segment spans residues 137 to 153 (KRRLKRFRNRSYERTND). A helical membrane pass occupies residues 154–174 (LLVMGVFMITVINILLAAFTT). Topologically, residues 175–181 (TDGGGSH) are extracellular.

This sequence belongs to the ninjurin family.

It localises to the membrane. Effector of non-apoptotic necrotic cell death that mediates plasma membrane rupture (cytolysis): oligomerizes in response to death stimuli and promotes plasma membrane rupture by introducing hydrophilic faces of 2 alpha helices into the hydrophobic membrane, leading to release intracellular molecules that propagate the inflammatory response. Also acts as a homophilic transmembrane adhesion molecule that promotes cell adhesion by mediating homophilic interactions via its extracellular region. The chain is Ninjurin-B from Drosophila melanogaster (Fruit fly).